Consider the following 298-residue polypeptide: Putative ankyrin repeat-containing protein TP_0502 (298 aa).

4 ANK repeats span residues 143–172 (CFEE…SAAL), 176–205 (RGTP…PVDQ), 210–239 (RAYS…DPNV), and 243–272 (NGQT…NPYL).

This chain is Putative ankyrin repeat-containing protein TP_0502, found in Treponema pallidum (strain Nichols).